Here is a 619-residue protein sequence, read N- to C-terminus: Long-chain fatty acid transport protein 6 (619 aa).

Helical transmembrane passes span 22 to 42 (LLFP…LIII) and 119 to 139 (VHVW…NTNI). AMP is bound at residue 221–232 (YIFTSGTTGLPK).

It belongs to the ATP-dependent AMP-binding enzyme family. Strongly expressed in heart and localizes to cardiac myocytes. Expressed at moderate levels in placenta, testis, and adrenal glands. Expressed at very low levels in kidney, bladder and uterus.

Its subcellular location is the cell membrane. The protein resides in the sarcolemma. It carries out the reaction a fatty acid(in) = a fatty acid(out). The catalysed reaction is hexadecanoate(out) = hexadecanoate(in). The enzyme catalyses (9Z)-octadecenoate(out) = (9Z)-octadecenoate(in). It catalyses the reaction (9Z,12Z)-octadecadienoate(out) = (9Z,12Z)-octadecadienoate(in). It carries out the reaction a very long-chain fatty acid + ATP + CoA = a very long-chain fatty acyl-CoA + AMP + diphosphate. The catalysed reaction is tetracosanoate + ATP + CoA = tetracosanoyl-CoA + AMP + diphosphate. The enzyme catalyses a long-chain fatty acid + ATP + CoA = a long-chain fatty acyl-CoA + AMP + diphosphate. It catalyses the reaction (5Z,8Z,11Z,14Z)-eicosatetraenoate + ATP + CoA = (5Z,8Z,11Z,14Z)-eicosatetraenoyl-CoA + AMP + diphosphate. It carries out the reaction (9Z)-octadecenoate + ATP + CoA = (9Z)-octadecenoyl-CoA + AMP + diphosphate. In terms of biological role, mediates the import of long-chain fatty acids (LCFA) into the cell by facilitating their transport at the plasma membrane. Also functions as an acyl-CoA ligase catalyzing the ATP-dependent formation of fatty acyl-CoA using LCFA and very-long-chain fatty acids (VLCFA) as substrates. Plays a pivotal role in regulating available LCFA substrates from exogenous sources in tissues undergoing high levels of beta-oxidation such as the heart. The polypeptide is Long-chain fatty acid transport protein 6 (SLC27A6) (Homo sapiens (Human)).